Reading from the N-terminus, the 238-residue chain is Small ribosomal subunit protein uS2 (238 aa).

Belongs to the universal ribosomal protein uS2 family.

This is Small ribosomal subunit protein uS2 from Prochlorococcus marinus (strain MIT 9211).